The chain runs to 426 residues: UPF0761 membrane protein Nmul_A0452 (426 aa).

6 helical membrane-spanning segments follow: residues 48 to 68, 106 to 126, 145 to 165, 187 to 207, 217 to 237, and 255 to 275; these read LLSLVPMLAIGLSVIAAFPAF, LTAIGIAFLGVTALALMLTID, LLIYWSVLTIGPLLIGASLSL, LLRLSPLVLTSIAFSASYLIV, AIAGGVAAAIGFEIMKEGFAF, and IPIFLLWLYLSWLMVLLGAVI.

The protein belongs to the UPF0761 family.

It localises to the cell inner membrane. This is UPF0761 membrane protein Nmul_A0452 from Nitrosospira multiformis (strain ATCC 25196 / NCIMB 11849 / C 71).